We begin with the raw amino-acid sequence, 439 residues long: Xylose isomerase (439 aa).

Catalysis depends on residues histidine 101 and aspartate 104. 7 residues coordinate Mg(2+): glutamate 232, glutamate 268, histidine 271, aspartate 296, aspartate 307, aspartate 309, and aspartate 339.

The protein belongs to the xylose isomerase family. Homotetramer. Mg(2+) is required as a cofactor.

It localises to the cytoplasm. It catalyses the reaction alpha-D-xylose = alpha-D-xylulofuranose. The sequence is that of Xylose isomerase from Pseudoalteromonas atlantica (strain T6c / ATCC BAA-1087).